Consider the following 110-residue polypeptide: BET1-like protein (110 aa).

Over 1–85 (MADPWNRGHG…MVRSGRDNRK (85 aa)) the chain is Cytoplasmic. One can recognise a t-SNARE coiled-coil homology domain in the interval 14–76 (DMLDAENKRM…TGSVKRFSTM (63 aa)). The chain crosses the membrane as a helical; Anchor for type IV membrane protein span at residues 86 to 106 (ILCYVSVGLVVAFFLLYYLVS). Residues 107–110 (RMQN) lie on the Lumenal side of the membrane.

In terms of assembly, component of a SNARE complex consisting of stx5, ykt6, gosr2 and bet1l.

It is found in the golgi apparatus membrane. In terms of biological role, vesicle SNARE required for targeting and fusion of retrograde transport vesicles with the Golgi complex. Required for the integrity of the Golgi complex. This is BET1-like protein (bet1l) from Danio rerio (Zebrafish).